Consider the following 333-residue polypeptide: Glycerol-3-phosphate dehydrogenase [NAD(P)+] (333 aa).

NADPH is bound by residues Trp-12, His-31, and Lys-105. Residues Lys-105, Gly-134, and Ser-136 each contribute to the sn-glycerol 3-phosphate site. Ala-138 serves as a coordination point for NADPH. Positions 189, 242, 252, 253, and 254 each coordinate sn-glycerol 3-phosphate. Lys-189 acts as the Proton acceptor in catalysis. Arg-253 is an NADPH binding site. NADPH contacts are provided by Val-278 and Glu-280.

Belongs to the NAD-dependent glycerol-3-phosphate dehydrogenase family.

The protein localises to the cytoplasm. The enzyme catalyses sn-glycerol 3-phosphate + NAD(+) = dihydroxyacetone phosphate + NADH + H(+). The catalysed reaction is sn-glycerol 3-phosphate + NADP(+) = dihydroxyacetone phosphate + NADPH + H(+). Its pathway is membrane lipid metabolism; glycerophospholipid metabolism. Functionally, catalyzes the reduction of the glycolytic intermediate dihydroxyacetone phosphate (DHAP) to sn-glycerol 3-phosphate (G3P), the key precursor for phospholipid synthesis. This chain is Glycerol-3-phosphate dehydrogenase [NAD(P)+], found in Brachyspira hyodysenteriae (strain ATCC 49526 / WA1).